A 294-amino-acid polypeptide reads, in one-letter code: Lycopene elongase/hydratase (294 aa).

Transmembrane regions (helical) follow at residues 31–51 (FWLY…DGPG), 53–73 (LFSP…NVFL), 115–135 (LALL…LAWM), 160–180 (GLYI…APPA), 182–202 (AVVG…IPDI), 222–242 (TYYY…FTHW), 243–263 (VFGV…GVGV), and 274–294 (AINT…MLYG).

It belongs to the UbiA prenyltransferase family.

It is found in the cell membrane. The catalysed reaction is all-trans-lycopene + dimethylallyl diphosphate + H2O = dihydroisopentenyldehydrorhodopin + diphosphate. It carries out the reaction isopentenyldehydrorhodopin + dimethylallyl diphosphate + H2O = dihydrobisanhydrobacterioruberin + diphosphate. Its pathway is carotenoid biosynthesis. Involved in the biosynthesis of the acyclic C50 carotenoid bacterioruberin (BR). Acts as a bifunctional elongase/hydratase that catalyzes the elongation of lycopene by attaching a C(5) isoprene unit at C-2, as well as the hydroxylation of the previous end of the molecule. The enzyme acts at both ends of the substrate, and catalyzes the conversion of lycopene to the C(45) intermediate dihydroisopentenyldehydrorhodopin (DH-IDR) and the conversion of isopentenyldehydrorhodopin (IDR) to the C(50) carotenoid dihydrobisanhydrobacterioruberin (DH-BABR). Can also catalyze the conversion of lycopene to tetrahydrobisanhydrobacterioruberin (TH-BABR). This Haloarcula japonica (strain ATCC 49778 / DSM 6131 / JCM 7785 / NBRC 101032 / NCIMB 13157 / TR-1) protein is Lycopene elongase/hydratase.